A 384-amino-acid polypeptide reads, in one-letter code: Large ribosomal subunit protein uL3m (384 aa).

2 disordered regions span residues 80–101 (NQVT…KRRE) and 237–262 (QEAS…SGSR). Polar residues predominate over residues 240-249 (SHGNSLNHRT).

It belongs to the universal ribosomal protein uL3 family. In terms of assembly, component of the mitochondrial large ribosomal subunit (mt-LSU). Mature N.crassa 74S mitochondrial ribosomes consist of a small (37S) and a large (54S) subunit. The 37S small subunit contains a 16S ribosomal RNA (16S mt-rRNA) and 32 different proteins. The 54S large subunit contains a 23S rRNA (23S mt-rRNA) and 42 different proteins.

The protein localises to the mitochondrion. Component of the mitochondrial ribosome (mitoribosome), a dedicated translation machinery responsible for the synthesis of mitochondrial genome-encoded proteins, including at least some of the essential transmembrane subunits of the mitochondrial respiratory chain. The mitoribosomes are attached to the mitochondrial inner membrane and translation products are cotranslationally integrated into the membrane. The polypeptide is Large ribosomal subunit protein uL3m (mrpl9) (Neurospora crassa (strain ATCC 24698 / 74-OR23-1A / CBS 708.71 / DSM 1257 / FGSC 987)).